A 40-amino-acid polypeptide reads, in one-letter code: Photosystem II reaction center protein J (40 aa).

A helical transmembrane segment spans residues 8–28 (IPLWLIGTVVGTPVISLVGIF).

It belongs to the PsbJ family. PSII is composed of 1 copy each of membrane proteins PsbA, PsbB, PsbC, PsbD, PsbE, PsbF, PsbH, PsbI, PsbJ, PsbK, PsbL, PsbM, PsbT, PsbX, PsbY, PsbZ, Psb30/Ycf12, at least 3 peripheral proteins of the oxygen-evolving complex and a large number of cofactors. It forms dimeric complexes.

Its subcellular location is the plastid. The protein resides in the chloroplast thylakoid membrane. Functionally, one of the components of the core complex of photosystem II (PSII). PSII is a light-driven water:plastoquinone oxidoreductase that uses light energy to abstract electrons from H(2)O, generating O(2) and a proton gradient subsequently used for ATP formation. It consists of a core antenna complex that captures photons, and an electron transfer chain that converts photonic excitation into a charge separation. The protein is Photosystem II reaction center protein J of Huperzia lucidula (Shining clubmoss).